The chain runs to 529 residues: Lysine--tRNA ligase (529 aa).

Residues 44 to 52 (PSGLPHIGT) carry the 'HIGH' region motif. The 'KMSKS' region motif lies at 290–294 (KISKS). K293 contacts ATP.

The protein belongs to the class-I aminoacyl-tRNA synthetase family.

Its subcellular location is the cytoplasm. The catalysed reaction is tRNA(Lys) + L-lysine + ATP = L-lysyl-tRNA(Lys) + AMP + diphosphate. The polypeptide is Lysine--tRNA ligase (Rickettsia akari (strain Hartford)).